The sequence spans 396 residues: Probable sugar efflux transporter (396 aa).

12 helical membrane-spanning segments follow: residues 15 to 35 (VVTL…PVGL), 50 to 70 (VGIM…PFML), 81 to 101 (LICL…SWSF), 103 to 123 (VLVI…SITA), 136 to 156 (AQAL…GLPL), 170 to 190 (FFAI…LLPL), 209 to 229 (PALM…YTAY), 246 to 266 (FATA…VIFG), 275 to 295 (ALVS…LPAA), 299 to 319 (IHLG…GLGM), 333 to 353 (VAMA…ALVG), and 364 to 384 (MIGY…IIIF).

This sequence belongs to the major facilitator superfamily. SotB (TC 2.A.1.2) family.

The protein resides in the cell inner membrane. In terms of biological role, involved in the efflux of sugars. The physiological role may be the reduction of the intracellular concentration of toxic sugars or sugar metabolites. This chain is Probable sugar efflux transporter, found in Escherichia coli O157:H7 (strain EC4115 / EHEC).